Here is a 503-residue protein sequence, read N- to C-terminus: MEEFQGYIELEGSWQHNFFYPLIFQEYIFSFAYGHDLNKSILLETSGNRKYSLLIVKRLITRMYQHNHLILSSNDSNQNDFWGHKRNFYSQMISEGFSLIVEIPFYLLLIASPEKKKIVKSHNLRSIHSIFPFLEDKFLHLNSVLDILLPYPTHLEILVQTLRYWIRDASSLHLLRLFLYEYHNWNSLFIPKKSIYFFFKRNQRLFLFLYNFHVCEYESILFFICNQSSHLRATSYGALLERTFFYGKLEYLVKLFTKDFAGILWLFKDPSPHSVRYKGKSILASKGTFFLMHKWKFYLIYFWQCNFSVWSHPRRIYINRLSTHCLDFIGFFSSVQLTSSVVRSQILENTFLIDNTIKRFDPKIPISTLIGSLAKAQFCNRLGHPISKSVWIDLSDSDIIDRFGRICRNLSHYYSGSSRKKSLYRLKYILKISCARTLARKHKSAVRAFLKRLGSEFLEEFFTEQEKVLSLILPKNGSNSWGFYGGSIWYLDIICIHNLANDE.

This sequence belongs to the intron maturase 2 family. MatK subfamily.

Its subcellular location is the plastid. The protein localises to the chloroplast. Usually encoded in the trnK tRNA gene intron. Probably assists in splicing its own and other chloroplast group II introns. In Silene latifolia (White campion), this protein is Maturase K.